The sequence spans 359 residues: Acyl-CoA Delta-9 desaturase (359 aa).

Transmembrane regions (helical) follow at residues 51–71 and 74–94; these read VILF…AFTS and IATT…ITGG. Fe cation is bound by residues His-96, His-101, His-133, His-136, and His-137. The short motif at 96–101 is the Histidine box-1 element; that stretch reads HRLWAH. Residues 133–137 carry the Histidine box-2 motif; sequence HRVHH. The next 2 helical transmembrane spans lie at 194–214 and 222–244; these read YLIL…VYMW and WFVA…NSAA. His-245, His-274, His-277, and His-278 together coordinate Fe cation. The Histidine box-3 motif lies at 274–278; the sequence is HNYHH.

Belongs to the fatty acid desaturase type 1 family. Fe(2+) is required as a cofactor.

Its subcellular location is the membrane. The enzyme catalyses octadecanoyl-CoA + 2 Fe(II)-[cytochrome b5] + O2 + 2 H(+) = (9Z)-octadecenoyl-CoA + 2 Fe(III)-[cytochrome b5] + 2 H2O. The catalysed reaction is hexadecanoyl-CoA + 2 Fe(II)-[cytochrome b5] + O2 + 2 H(+) = (9Z)-hexadecenoyl-CoA + 2 Fe(III)-[cytochrome b5] + 2 H2O. In terms of biological role, catalyzes the formation of a Delta9 double bond, acting on saturated fatty acyl substrates like palmitoyl-CoA (hexadecanoyl-CoA) and stearoyl-CoA (octadecanoyl-CoA) with higher desaturation activity on octadecanoyl-CoA than hexadecanoyl-CoA. This is Acyl-CoA Delta-9 desaturase from Acheta domesticus (House cricket).